Reading from the N-terminus, the 235-residue chain is Small ribosomal subunit protein uS3 (235 aa).

Residues 39-107 (VRQFLNKELA…PAQINIAEVK (69 aa)) enclose the KH type-2 domain. Residues 215–226 (AQQPEQQPATPK) show a composition bias toward low complexity. Residues 215–235 (AQQPEQQPATPKKAPRGKGRK) form a disordered region.

It belongs to the universal ribosomal protein uS3 family. As to quaternary structure, part of the 30S ribosomal subunit. Forms a tight complex with proteins S10 and S14.

Its function is as follows. Binds the lower part of the 30S subunit head. Binds mRNA in the 70S ribosome, positioning it for translation. The chain is Small ribosomal subunit protein uS3 from Histophilus somni (strain 129Pt) (Haemophilus somnus).